Consider the following 63-residue polypeptide: MNFSRIIFLVFACFVALASVSAAPEPRWKIFKKIERVGQNVRDGIIKAGPAIQVLGTAKALGK.

The N-terminal stretch at 1-22 (MNFSRIIFLVFACFVALASVSA) is a signal peptide. A propeptide spans 23–26 (APEP) (removed by a dipeptidylpeptidase). Position 61 is a leucine amide (Leu61).

The protein belongs to the cecropin family.

It localises to the secreted. Functionally, has antibacterial activity. This Hyphantria cunea (Fall webworm moth) protein is Hyphancin-3D.